The chain runs to 179 residues: Large ribosomal subunit protein uL5 (179 aa).

It belongs to the universal ribosomal protein uL5 family. In terms of assembly, part of the 50S ribosomal subunit; part of the 5S rRNA/L5/L18/L25 subcomplex. Contacts the 5S rRNA and the P site tRNA. Forms a bridge to the 30S subunit in the 70S ribosome.

In terms of biological role, this is one of the proteins that bind and probably mediate the attachment of the 5S RNA into the large ribosomal subunit, where it forms part of the central protuberance. In the 70S ribosome it contacts protein S13 of the 30S subunit (bridge B1b), connecting the 2 subunits; this bridge is implicated in subunit movement. Contacts the P site tRNA; the 5S rRNA and some of its associated proteins might help stabilize positioning of ribosome-bound tRNAs. The protein is Large ribosomal subunit protein uL5 of Bordetella bronchiseptica (strain ATCC BAA-588 / NCTC 13252 / RB50) (Alcaligenes bronchisepticus).